Consider the following 511-residue polypeptide: Arabinose import ATP-binding protein AraG (511 aa).

ABC transporter domains are found at residues 5–240 (LEFR…MVGR) and 240–501 (RQID…LRPR). 37–44 (GENGAGKS) is an ATP binding site.

It belongs to the ABC transporter superfamily. Arabinose importer (TC 3.A.1.2.2) family. As to quaternary structure, the complex is composed of two ATP-binding proteins (AraG), two transmembrane proteins (AraH) and a solute-binding protein (AraF).

Its subcellular location is the cell inner membrane. It catalyses the reaction L-arabinose(out) + ATP + H2O = L-arabinose(in) + ADP + phosphate + H(+). Its function is as follows. Part of the ABC transporter complex AraFGH involved in arabinose import. Responsible for energy coupling to the transport system. The sequence is that of Arabinose import ATP-binding protein AraG from Ralstonia nicotianae (strain ATCC BAA-1114 / GMI1000) (Ralstonia solanacearum).